We begin with the raw amino-acid sequence, 426 residues long: Cytochrome b-c1 complex subunit 2, mitochondrial (426 aa).

Residues 1–30 (MKSFTRNLRRFQTPRRNLHGISYTPKKVEG) constitute a mitochondrion transit peptide.

Belongs to the peptidase M16 family. UQCRC2/QCR2 subfamily. Component of the ubiquinol-cytochrome c oxidoreductase (cytochrome b-c1 complex, complex III, CIII), a multisubunit enzyme composed of 3 respiratory subunits cytochrome b, cytochrome c1 and Rieske protein, 2 core protein subunits, and additional low-molecular weight protein subunits. The complex exists as an obligatory dimer and forms supercomplexes (SCs) in the inner mitochondrial membrane with cytochrome c oxidase (complex IV, CIV).

It is found in the mitochondrion inner membrane. Its function is as follows. Component of the ubiquinol-cytochrome c oxidoreductase, a multisubunit transmembrane complex that is part of the mitochondrial electron transport chain which drives oxidative phosphorylation. The respiratory chain contains 3 multisubunit complexes succinate dehydrogenase (complex II, CII), ubiquinol-cytochrome c oxidoreductase (cytochrome b-c1 complex, complex III, CIII) and cytochrome c oxidase (complex IV, CIV), that cooperate to transfer electrons derived from NADH and succinate to molecular oxygen, creating an electrochemical gradient over the inner membrane that drives transmembrane transport and the ATP synthase. The cytochrome b-c1 complex catalyzes electron transfer from ubiquinol to cytochrome c, linking this redox reaction to translocation of protons across the mitochondrial inner membrane, with protons being carried across the membrane as hydrogens on the quinol. In the process called Q cycle, 2 protons are consumed from the matrix, 4 protons are released into the intermembrane space and 2 electrons are passed to cytochrome c. In Schizosaccharomyces pombe (strain 972 / ATCC 24843) (Fission yeast), this protein is Cytochrome b-c1 complex subunit 2, mitochondrial (qcr2).